The following is a 295-amino-acid chain: Probable protein phosphatase 2C 5 (295 aa).

The 272-residue stretch at 23–294 folds into the PPM-type phosphatase domain; it reads QYAATHMQGW…DNMTCILVLF (272 aa). 2 residues coordinate Mn(2+): aspartate 57 and glycine 58. Positions 151–170 are disordered; the sequence is NRDGKPFDMSKDHKPDDDQE. Mn(2+)-binding residues include aspartate 237 and aspartate 285.

This sequence belongs to the PP2C family. The cofactor is Mg(2+). Requires Mn(2+) as cofactor.

It is found in the membrane. It catalyses the reaction O-phospho-L-seryl-[protein] + H2O = L-seryl-[protein] + phosphate. The enzyme catalyses O-phospho-L-threonyl-[protein] + H2O = L-threonyl-[protein] + phosphate. Functionally, enzyme with a broad specificity. The polypeptide is Probable protein phosphatase 2C 5 (Paramecium tetraurelia).